The following is a 32-amino-acid chain: U3-ctenitoxin-Pk1a (32 aa).

3 disulfide bridges follow: cysteine 3-cysteine 17, cysteine 10-cysteine 21, and cysteine 16-cysteine 30.

Belongs to the neurotoxin 17 (21C2) family. In terms of tissue distribution, expressed by the venom gland.

It localises to the secreted. Its function is as follows. May act as a neurotoxin. This is U3-ctenitoxin-Pk1a from Phoneutria keyserlingi (Brazilian wandering spider).